The chain runs to 232 residues: MNRYTLKEIEENLGVFFNNHTLLKTALTHSSFGNQFKDAEYNERLEFLGDSVLQLCITEYLFNNYKHKTEGELTKIRSLIVCENSLYEIAKKINLGSYIRMSKGEEITGGRERISIQADAVEAIIAAVYLDKGIGFVRDFILLHFEEIINKAINNEIVLDFKTKLQELLQKDGEVVIQYELTKFEGPPHRRKFFTNVVIDKKLMGEGSGYSKKEAEQNAAKQALDILEGKHE.

Residues 6-133 (LKEIEENLGV…IIAAVYLDKG (128 aa)) form the RNase III domain. Glu-46 serves as a coordination point for Mg(2+). Asp-50 is an active-site residue. Residues Asp-119 and Glu-122 each contribute to the Mg(2+) site. Glu-122 is an active-site residue. The DRBM domain occupies 160 to 229 (DFKTKLQELL…AKQALDILEG (70 aa)).

The protein belongs to the ribonuclease III family. In terms of assembly, homodimer. Requires Mg(2+) as cofactor.

The protein resides in the cytoplasm. The catalysed reaction is Endonucleolytic cleavage to 5'-phosphomonoester.. In terms of biological role, digests double-stranded RNA. Involved in the processing of primary rRNA transcript to yield the immediate precursors to the large and small rRNAs (23S and 16S). Processes some mRNAs, and tRNAs when they are encoded in the rRNA operon. Processes pre-crRNA and tracrRNA of type II CRISPR loci if present in the organism. This chain is Ribonuclease 3, found in Clostridium beijerinckii (strain ATCC 51743 / NCIMB 8052) (Clostridium acetobutylicum).